The primary structure comprises 322 residues: GATA transcription factor 8 (322 aa).

Residues 93–168 (TLVEKKEDSF…DKDRVKDNVC (76 aa)) are disordered. Residues 102-141 (FSTNTDSSSSHSQFRSSSPVSVLESSSSSSQTTNTTSLVL) are compositionally biased toward low complexity. A compositionally biased stretch (basic residues) spans 144–154 (KHGRPRTKRPR). Residues 147 to 154 (RPRTKRPR) carry the Nuclear localization signal motif. The GATA-type zinc finger occupies 225–279 (QYPLRKCMHCEVTKTPQWRLGPMGPKTLCNACGVRYKSGRLFPEYRPAASPTFTP).

It belongs to the type IV zinc-finger family. Class A subfamily.

It is found in the nucleus. Functionally, transcriptional activator that specifically binds 5'-GATA-3' or 5'-GAT-3' motifs within gene promoters. May be involved in the regulation of some light-responsive genes. The chain is GATA transcription factor 8 (GATA8) from Arabidopsis thaliana (Mouse-ear cress).